Consider the following 638-residue polypeptide: Autolysin (638 aa).

The first 28 residues, 1-28, serve as a signal peptide directing secretion; it reads MSLATRRFGAAAALLVAACVLCTAPAWA. Residues 29-183 constitute a propeptide, activation peptide; it reads QNETTGTGMV…LKSILKGSQK (155 aa). The N-linked (GlcNAc...) asparagine glycan is linked to Asn30. Positions 95–102 match the Cysteine switch motif; the sequence is PRCNVPRA. Cys97 provides a ligand contact to Zn(2+). An N-linked (GlcNAc...) asparagine glycan is attached at Asn126. Residues 269–292 are disordered; that stretch reads VTPPPRPPRPPRPPPRAGSTISSL. The segment covering 270–284 has biased composition (pro residues); that stretch reads TPPPRPPRPPRPPPR. Asn296 is a glycosylation site (N-linked (GlcNAc...) asparagine). His396 serves as a coordination point for Zn(2+). Glu397 is a catalytic residue. Positions 400 and 406 each coordinate Zn(2+). Asn458, Asn465, Asn470, and Asn523 each carry an N-linked (GlcNAc...) asparagine glycan.

The protein belongs to the peptidase M11 family. Zn(2+) is required as a cofactor. Present in 2 forms: an inactive V-form in vegetative cells and an active and soluble G-form. The V-form enzyme may be converted to the G-form enzyme during gametic differentiation under nitrogen-starved conditions.

The protein resides in the periplasm. The protein localises to the secreted. It localises to the cell wall. It carries out the reaction Cleavage of the proline- and hydroxyproline-rich proteins of the Chlamydomonas cell wall. Also cleaves azocasein, gelatin and Leu-Trp-Met-|-Arg-Phe-Ala.. Its function is as follows. Mediates digestion of the cell walls of the 2 mating type gametes during mating as a necessary prelude to cell fusion. This enzyme acts specifically on the framework proteins (inner wall) of the cell wall, cleaving several model peptides at specific sites. The sequence is that of Autolysin from Chlamydomonas reinhardtii (Chlamydomonas smithii).